The following is a 238-amino-acid chain: Ditrans,polycis-undecaprenyl-diphosphate synthase ((2E,6E)-farnesyl-diphosphate specific) (238 aa).

Asp-14 is a catalytic residue. Asp-14 serves as a coordination point for Mg(2+). Residues 15–18 (GNGR), Trp-19, Arg-27, His-31, and 59–61 (SSE) contribute to the substrate site. Asn-62 serves as the catalytic Proton acceptor. Residues Trp-63, Arg-65, Arg-182, and 188–190 (RIS) contribute to the substrate site. Residue Glu-201 participates in Mg(2+) binding.

This sequence belongs to the UPP synthase family. As to quaternary structure, homodimer. It depends on Mg(2+) as a cofactor.

It catalyses the reaction 8 isopentenyl diphosphate + (2E,6E)-farnesyl diphosphate = di-trans,octa-cis-undecaprenyl diphosphate + 8 diphosphate. Its function is as follows. Catalyzes the sequential condensation of isopentenyl diphosphate (IPP) with (2E,6E)-farnesyl diphosphate (E,E-FPP) to yield (2Z,6Z,10Z,14Z,18Z,22Z,26Z,30Z,34E,38E)-undecaprenyl diphosphate (di-trans,octa-cis-UPP). UPP is the precursor of glycosyl carrier lipid in the biosynthesis of bacterial cell wall polysaccharide components such as peptidoglycan and lipopolysaccharide. The protein is Ditrans,polycis-undecaprenyl-diphosphate synthase ((2E,6E)-farnesyl-diphosphate specific) of Legionella pneumophila (strain Paris).